Reading from the N-terminus, the 536-residue chain is Zinc finger CCCH domain-containing protein 18 (536 aa).

The C3H1-type zinc finger occupies 156-183 (EFPVKICHYFNKGFCKHGNNCRYFHGQI). Positions 211–294 (SLEKLEGEII…HGQHSVILAE (84 aa)) constitute an HTH OST-type domain. One can recognise an RRM domain in the interval 317–392 (RQIYLTFPAE…ARVLVKPYRE (76 aa)).

Possesses ribonuclease activity in vitro. In Arabidopsis thaliana (Mouse-ear cress), this protein is Zinc finger CCCH domain-containing protein 18.